The chain runs to 739 residues: Vascular cell adhesion protein 1 (739 aa).

An N-terminal signal peptide occupies residues 1–24; that stretch reads MPRKMVVIFGASNILWMVFAVSQA. Ig-like C2-type domains follow at residues 25–105, 109–212, 223–309, 312–399, 408–506, 511–595, and 600–684; these read SKME…KKLE, QVEI…KERE, PRNT…LIVQ, PFTV…IKVD, EVEM…QTLY, PRDT…VELI, and PKDI…LTLD. The Extracellular segment spans residues 25–698; sequence SKMEIFLEPR…ENNKDYFSPE (674 aa). Disulfide bonds link Cys47–Cys95, Cys52–Cys99, Cys137–Cys195, Cys246–Cys291, and Cys335–Cys383. Asn76 and Asn77 each carry an N-linked (GlcNAc...) asparagine glycan. Residue Asn273 is glycosylated (N-linked (GlcNAc...) asparagine). An N-linked (GlcNAc...) asparagine glycan is attached at Asn531. Cys534 and Cys579 are oxidised to a cystine. Residues 699 to 720 traverse the membrane as a helical segment; the sequence is LLVLYCASSLIIPAIGMIIYFA. Residues 721–739 lie on the Cytoplasmic side of the membrane; that stretch reads RRANMKGSYSLVEAQKSKV.

In terms of processing, cleaved by the metalloproteinase ADAM17 to generate the soluble form. Post-translationally, sialoglycoprotein. Ubiquitinated by TRIM65 via 'Lys-48'-linked ubiquitination; leading to proteasomal degradation.

The protein localises to the cell membrane. It localises to the secreted. Its function is as follows. Cell adhesion glycoprotein predominantly expressed on the surface of endothelial cells that plays an important role in immune surveillance and inflammation. Acts as a major regulator of leukocyte adhesion to the endothelium through interaction with different types of integrins. During inflammatory responses, binds ligands on the surface of activated endothelial cells to initiate the activation of calcium channels and the plasma membrane-associated small GTPase RAC1 leading to leukocyte transendothelial migration. Also serves as a quality-control checkpoint for entry into bone marrow by providing a 'don't-eat-me' stamping in the context of major histocompatibility complex (MHC) class-I presentation. This Canis lupus familiaris (Dog) protein is Vascular cell adhesion protein 1 (VCAM1).